Here is a 630-residue protein sequence, read N- to C-terminus: Eukaryotic translation initiation factor 2-alpha kinase 1 (630 aa).

The segment at 1–40 is disordered; the sequence is MQGGNSGVRKREEEGDGAGAVAAPPAIDFPAEGPDPEYDE. Residues 85 to 104 carry the SIFI-degron motif; sequence LRSRQVFKLLCQTFIKMGLL. A Protein kinase domain is found at 167-583; it reads FEELAILGKG…AIQLLQSELF (417 aa). ATP contacts are provided by residues 173–181 and lysine 196; that span reads LGKGGYGRV. The tract at residues 259–301 is disordered; it reads DQEEDREQCGVKNDESSSSSIIFAEPTPEKEKRFGESDTENQN. Threonine 285 carries the phosphothreonine modification. The span at 285–294 shows a compositional bias: basic and acidic residues; that stretch reads TPEKEKRFGE. The HRM 1 repeat unit spans residues 410–415; that stretch reads ACPYVM. The active-site Proton acceptor is the aspartate 442. Threonine 486 and threonine 488 each carry phosphothreonine; by autocatalysis. Residue threonine 493 is modified to Phosphothreonine. An HRM 2 repeat occupies 552 to 557; the sequence is RCPVQA.

The protein belongs to the protein kinase superfamily. Ser/Thr protein kinase family. GCN2 subfamily. Synthesized in an inactive form that binds to the N-terminal domain of CDC37. Has to be associated with a multiprotein complex containing Hsp90, CDC37 and PPP5C for maturation and activation by autophosphorylation. The phosphatase PPP5C modulates this activation. Homodimer; homodimerizes in presence of heme, forming a disulfide-linked inactive homodimer. Interacts with DELE1; binds both to full-length DELE1 and processed form of DELE1 (S-DELE1) in response to stress, leading to activate its protein kinase activity and trigger the integrated stress response (ISR). Activated by autophosphorylation; phosphorylated predominantly on serine and threonine residues, but also on tyrosine residues. Autophosphorylation at Thr-488 is required for kinase activation. The active autophosphorylated form apparently is largely refractory to cellular heme fluctuations. Post-translationally, ubiquitinated and degraded by the SIFI complex once the mitochondrial stress has been resolved, thereby providing stress response silencing. Within the SIFI complex, UBR4 initiates ubiquitin chain that are further elongated or branched by KCMF1.

It catalyses the reaction L-seryl-[protein] + ATP = O-phospho-L-seryl-[protein] + ADP + H(+). The enzyme catalyses L-threonyl-[protein] + ATP = O-phospho-L-threonyl-[protein] + ADP + H(+). Its activity is regulated as follows. In normal conditions, the protein kinase activity is inhibited; inhibition is relieved by various stress conditions. Inhibited by heme: in presence of heme, forms a disulfide-linked inactive homodimer. Heme depletion relieves inhibition and stimulates kinase activity by autophosphorylation. Inhibited by the heme metabolites biliverdin and bilirubin. Induced by oxidative stress generated by arsenite treatment. Binding of nitric oxide (NO) to the heme iron in the N-terminal heme-binding domain activates the kinase activity, while binding of carbon monoxide (CO) suppresses kinase activity. Protein kinase activity is also activated upon binding to DELE1 in response to various stress, triggering the integrated stress response (ISR): activated by full-length DELE1 in response to iron deficiency, while it is activated by the processed form of DELE1 (S-DELE1) in response to mitochondrial stress. In terms of biological role, metabolic-stress sensing protein kinase that phosphorylates the alpha subunit of eukaryotic translation initiation factor 2 (EIF2S1/eIF-2-alpha) in response to various stress conditions. Key activator of the integrated stress response (ISR) required for adaptation to various stress, such as heme deficiency, oxidative stress, osmotic shock, mitochondrial dysfunction and heat shock. EIF2S1/eIF-2-alpha phosphorylation in response to stress converts EIF2S1/eIF-2-alpha in a global protein synthesis inhibitor, leading to a global attenuation of cap-dependent translation, while concomitantly initiating the preferential translation of ISR-specific mRNAs, such as the transcriptional activator ATF4, and hence allowing ATF4-mediated reprogramming. Acts as a key sensor of heme-deficiency: in normal conditions, binds hemin via a cysteine thiolate and histidine nitrogenous coordination, leading to inhibit the protein kinase activity. This binding occurs with moderate affinity, allowing it to sense the heme concentration within the cell: heme depletion relieves inhibition and stimulates kinase activity, activating the ISR. Thanks to this unique heme-sensing capacity, plays a crucial role to shut off protein synthesis during acute heme-deficient conditions. In red blood cells (RBCs), controls hemoglobin synthesis ensuring a coordinated regulation of the synthesis of its heme and globin moieties. It thereby plays an essential protective role for RBC survival in anemias of iron deficiency. Iron deficiency also triggers activation by full-length DELE1. Also activates the ISR in response to mitochondrial dysfunction: HRI/EIF2AK1 protein kinase activity is activated upon binding to the processed form of DELE1 (S-DELE1), thereby promoting the ATF4-mediated reprogramming. Also acts as an activator of mitophagy in response to mitochondrial damage: catalyzes phosphorylation of eIF-2-alpha (EIF2S1) following activation by S-DELE1, thereby promoting mitochondrial localization of EIF2S1, triggering PRKN-independent mitophagy. The chain is Eukaryotic translation initiation factor 2-alpha kinase 1 from Homo sapiens (Human).